A 511-amino-acid polypeptide reads, in one-letter code: MDTAVEANLGAAGHGPRTELSDEDYYPQGSWDTVFLVALLLLGLPANGLMAWLAGSQARHGAGTRLALLLLSLALSDFLFLAAATFQILEIQHGGHWPLGTAACRFYYFLWGVSYSSGLFLLTALSLDRCLLALCPRWYPGHRPARLPLWVCAGVWVLATLFSVPWLVFPEAAVWWYDLVICLDFWDTEELPLRMLEILGGFLPFLLLLVCHVLTQATACRTCCGHQPRRMACHGFARVAKTILSAYVVLRLPYQLAQLLYLAFLWDVYPGYLLWEALVYSDYLILLNSCLSPFLCLAASADLRALLRTVLSSFAAAVCEERPGSFIPAEPQTLPGPTSEGQSRLDSVVQPQVNPSVQLQSDSVVQPEVSPSAQPQSDSVAQPTVGSLIQPPLDTVVQLEVNPLTQPQLDPMAQPQVNPSAQPQSKSVVQPQVDPLTQPQLDPVAQPQSNTETPIPAFGDESASNPGEENSSGPCPDPTPGTPENLDRPAVPQEKSPSNVPPEEAPSAGPT.

The segment at 1–20 (MDTAVEANLGAAGHGPRTEL) is disordered. The Extracellular segment spans residues 1–33 (MDTAVEANLGAAGHGPRTELSDEDYYPQGSWDT). Residues 34-54 (VFLVALLLLGLPANGLMAWLA) traverse the membrane as a helical segment. Topologically, residues 55–65 (GSQARHGAGTR) are cytoplasmic. A helical transmembrane segment spans residues 66 to 86 (LALLLLSLALSDFLFLAAATF). Over 87 to 105 (QILEIQHGGHWPLGTAACR) the chain is Extracellular. Residues Cys-104 and Cys-182 are joined by a disulfide bond. A helical membrane pass occupies residues 106-126 (FYYFLWGVSYSSGLFLLTALS). Topologically, residues 127–148 (LDRCLLALCPRWYPGHRPARLP) are cytoplasmic. The helical transmembrane segment at 149–169 (LWVCAGVWVLATLFSVPWLVF) threads the bilayer. The Extracellular segment spans residues 170–194 (PEAAVWWYDLVICLDFWDTEELPLR). A helical transmembrane segment spans residues 195–215 (MLEILGGFLPFLLLLVCHVLT). Residues 216-258 (QATACRTCCGHQPRRMACHGFARVAKTILSAYVVLRLPYQLAQ) lie on the Cytoplasmic side of the membrane. A helical transmembrane segment spans residues 259–279 (LLYLAFLWDVYPGYLLWEALV). Topologically, residues 280–282 (YSD) are extracellular. A helical membrane pass occupies residues 283–303 (YLILLNSCLSPFLCLAASADL). The Cytoplasmic segment spans residues 304–511 (RALLRTVLSS…PEEAPSAGPT (208 aa)). Disordered stretches follow at residues 328–349 (PAEP…DSVV), 361–386 (SDSV…PTVG), and 407–511 (PQLD…AGPT). Polar residues-rich tracts occupy residues 335–345 (PGPTSEGQSRL) and 369–386 (VSPS…PTVG). Over residues 419-433 (PSAQPQSKSVVQPQV) the composition is skewed to low complexity. Composition is skewed to polar residues over residues 435 to 453 (PLTQ…NTET) and 462 to 473 (SASNPGEENSSG).

This sequence belongs to the G-protein coupled receptor 1 family.

Its subcellular location is the cell membrane. In terms of biological role, orphan receptor. This is Probable G-protein coupled receptor 152 (Gpr152) from Mus musculus (Mouse).